The sequence spans 143 residues: Small ribosomal subunit protein eS19y (143 aa).

The protein belongs to the eukaryotic ribosomal protein eS19 family.

The sequence is that of Small ribosomal subunit protein eS19y (RPS19B) from Arabidopsis thaliana (Mouse-ear cress).